A 252-amino-acid chain; its full sequence is Ubiquinone biosynthesis O-methyltransferase (252 aa).

Residues R51, G70, D91, and M136 each contribute to the S-adenosyl-L-methionine site.

This sequence belongs to the methyltransferase superfamily. UbiG/COQ3 family.

The catalysed reaction is a 3-demethylubiquinol + S-adenosyl-L-methionine = a ubiquinol + S-adenosyl-L-homocysteine + H(+). It carries out the reaction a 3-(all-trans-polyprenyl)benzene-1,2-diol + S-adenosyl-L-methionine = a 2-methoxy-6-(all-trans-polyprenyl)phenol + S-adenosyl-L-homocysteine + H(+). It participates in cofactor biosynthesis; ubiquinone biosynthesis. In terms of biological role, O-methyltransferase that catalyzes the 2 O-methylation steps in the ubiquinone biosynthetic pathway. In Albidiferax ferrireducens (strain ATCC BAA-621 / DSM 15236 / T118) (Rhodoferax ferrireducens), this protein is Ubiquinone biosynthesis O-methyltransferase.